The primary structure comprises 78 residues: Putative membrane protein insertion efficiency factor (78 aa).

The protein belongs to the UPF0161 family.

The protein localises to the cell membrane. Could be involved in insertion of integral membrane proteins into the membrane. This is Putative membrane protein insertion efficiency factor from Bacillus mycoides (strain KBAB4) (Bacillus weihenstephanensis).